The chain runs to 235 residues: Uridylate kinase (235 aa).

Residue 9-12 coordinates ATP; sequence KISG. Glycine 50 serves as a coordination point for UMP. ATP contacts are provided by glycine 51 and arginine 55. UMP-binding positions include aspartate 70 and 131–138; that span reads TGFPYFTT. Residues asparagine 159, tyrosine 165, and aspartate 168 each contribute to the ATP site.

This sequence belongs to the UMP kinase family. As to quaternary structure, homohexamer; trimer of dimers.

The protein resides in the cytoplasm. The enzyme catalyses UMP + ATP = UDP + ADP. Its pathway is pyrimidine metabolism; CTP biosynthesis via de novo pathway; UDP from UMP (UMPK route): step 1/1. With respect to regulation, unlike other bacteria, is not activated by GTP. UTP is a competitive inhibitor against UMP and a non-competitive inhibitor toward ATP. In terms of biological role, catalyzes the reversible phosphorylation of UMP to UDP, with ATP as the most efficient phosphate donor. Is also able to phosphorylate dUMP. The sequence is that of Uridylate kinase (pyrH) from Ureaplasma parvum serovar 3 (strain ATCC 700970).